The sequence spans 418 residues: Histidinol dehydrogenase (418 aa).

NAD(+)-binding residues include Tyr-119, Gln-180, and Asn-203. Thr-226, Gln-248, and His-251 together coordinate substrate. Residues Gln-248 and His-251 each coordinate Zn(2+). Catalysis depends on proton acceptor residues Glu-316 and His-317. Substrate is bound by residues His-317, Asp-350, Glu-404, and His-409. Zn(2+) is bound at residue Asp-350. His-409 lines the Zn(2+) pocket.

The protein belongs to the histidinol dehydrogenase family. Zn(2+) is required as a cofactor.

The catalysed reaction is L-histidinol + 2 NAD(+) + H2O = L-histidine + 2 NADH + 3 H(+). It participates in amino-acid biosynthesis; L-histidine biosynthesis; L-histidine from 5-phospho-alpha-D-ribose 1-diphosphate: step 9/9. Its function is as follows. Catalyzes the sequential NAD-dependent oxidations of L-histidinol to L-histidinaldehyde and then to L-histidine. This is Histidinol dehydrogenase from Staphylococcus aureus (strain MSSA476).